Reading from the N-terminus, the 240-residue chain is Ribose-5-phosphate isomerase A (240 aa).

Substrate is bound by residues 41–44 (TGST), 94–97 (DGAD), and 107–110 (KGGG). Glu-116 functions as the Proton acceptor in the catalytic mechanism. Lys-134 contributes to the substrate binding site.

The protein belongs to the ribose 5-phosphate isomerase family. As to quaternary structure, homodimer.

The enzyme catalyses aldehydo-D-ribose 5-phosphate = D-ribulose 5-phosphate. It participates in carbohydrate degradation; pentose phosphate pathway; D-ribose 5-phosphate from D-ribulose 5-phosphate (non-oxidative stage): step 1/1. Its function is as follows. Catalyzes the reversible conversion of ribose-5-phosphate to ribulose 5-phosphate. The sequence is that of Ribose-5-phosphate isomerase A from Polaromonas sp. (strain JS666 / ATCC BAA-500).